Consider the following 140-residue polypeptide: MSTMHVEVVSAEAQIYSGEAEFLVAPGEMGELGVYPRHVPLLTRIKPGPLRIRVPGQAEEVIVAVSGGLMEVQPDAITVLADVAVRGDEIDEARAEAAKKAAEAALEKATDDRETAAARQALKTAIAELKALDYLRRRVH.

It belongs to the ATPase epsilon chain family. In terms of assembly, F-type ATPases have 2 components, CF(1) - the catalytic core - and CF(0) - the membrane proton channel. CF(1) has five subunits: alpha(3), beta(3), gamma(1), delta(1), epsilon(1). CF(0) has three main subunits: a, b and c.

The protein localises to the cell inner membrane. Produces ATP from ADP in the presence of a proton gradient across the membrane. This Laribacter hongkongensis (strain HLHK9) protein is ATP synthase epsilon chain.